Here is an 819-residue protein sequence, read N- to C-terminus: Ferric-pyoverdine 358 receptor (819 aa).

Positions 1-47 (MSKPLPSALNPLAKALLIRHSLRPRHALSRIGMGLALSSALVFQVQA) are cleaved as a signal peptide. The TonB box motif lies at 115 to 122 (NTVTVTAS). In terms of domain architecture, TBDR plug spans 166 to 276 (SIRETPQTIT…PSAVVNVIRK (111 aa)). Residues 281 to 819 (EFKSHIQAGV…NATVTLRYDF (539 aa)) enclose the TBDR beta-barrel domain. The TonB C-terminal box signature appears at 802–819 (YGHYGAPRNATVTLRYDF).

Belongs to the TonB-dependent receptor family.

The protein localises to the cell outer membrane. In terms of biological role, specific receptor for the siderophore ferric pyoverdine (pseudobactin) 358. This Pseudomonas putida (Arthrobacter siderocapsulatus) protein is Ferric-pyoverdine 358 receptor (pupA).